A 330-amino-acid chain; its full sequence is DNA-binding death effector domain-containing protein 2 (330 aa).

One can recognise a DED domain in the interval 25 to 104 (SLHRMFEVVG…RHDLLPHLAR (80 aa)). Residues 104 to 109 (RKRRRP) carry the Nuclear localization signal motif. Residues 104-195 (RKRRRPVSPE…HQELGRPSSE (92 aa)) are disordered. Low complexity predominate over residues 137-147 (ASSSSDSPQSQ). A Bipartite nuclear localization signal motif is present at residues 156 to 174 (KRQRRSRGRPSSGARQRRR).

As to quaternary structure, interacts with CASP8, CASP10 and GTF3C3. Homodimerizes and heterodimerizes with DEDD. Expression is high in liver, heart, kidney, and testis but low in brain, spleen, lung, and skeleton muscle.

It localises to the nucleus. The protein localises to the nucleolus. Its function is as follows. May play a critical role in death receptor-induced apoptosis and may target CASP8 and CASP10 to the nucleus. May regulate degradation of intermediate filaments during apoptosis. May play a role in the general transcription machinery in the nucleus and might be an important regulator of the activity of GTF3C3. This is DNA-binding death effector domain-containing protein 2 (Dedd2) from Mus musculus (Mouse).